A 318-amino-acid polypeptide reads, in one-letter code: N-succinylornithine carbamoyltransferase (318 aa).

Carbamoyl phosphate is bound by residues 47 to 50 (SLRT), Trp75, and Arg110. A N(2)-succinyl-L-ornithine-binding site is contributed by Glu142. Position 147–150 (147–150 (HPLQ)) interacts with carbamoyl phosphate. 2 residues coordinate N(2)-succinyl-L-ornithine: His176 and Lys236. 274–275 (CL) is a binding site for carbamoyl phosphate. A N(2)-succinyl-L-ornithine-binding site is contributed by Arg278. Arg302 contacts carbamoyl phosphate.

Belongs to the aspartate/ornithine carbamoyltransferase superfamily. SOTCase family. As to quaternary structure, homotrimer.

The catalysed reaction is N(2)-succinyl-L-ornithine + carbamoyl phosphate = N(2)-succinyl-L-citrulline + phosphate + H(+). It functions in the pathway amino-acid biosynthesis; L-arginine biosynthesis. Functionally, catalyzes the transfer of the carbamoyl group from carbamoyl phosphate to the delta-amino group of N(2)-succinyl-L-ornithine to produce N(2)-succinyl-L-citrulline. Is essential for arginine biosynthesis. Has no activity with either L-ornithine or L-aspartate as substrate. Also has no detectable AOTCase activity, being unable to convert N(2)-acetyl-L-ornithine to N(2)-acetyl-L-citrulline. This chain is N-succinylornithine carbamoyltransferase, found in Bacteroides thetaiotaomicron (strain ATCC 29148 / DSM 2079 / JCM 5827 / CCUG 10774 / NCTC 10582 / VPI-5482 / E50).